A 466-amino-acid chain; its full sequence is Teichoic acids export ATP-binding protein TagH (466 aa).

The region spanning 27–249 is the ABC transporter domain; it reads NKAKSLIGSN…YEKFVQWFKK (223 aa). 63-70 contacts ATP; sequence GLNGAGKS. The unknown stretch occupies residues 250-466; it reads LPKKEQEKFK…TTEQSDGANQ (217 aa). Disordered stretches follow at residues 356-403 and 439-466; these read NMTS…SNQN and IHPG…GANQ. Basic residues predominate over residues 373–384; it reads PKKKVSQAKKTT. Residues 385–403 show a composition bias toward low complexity; that stretch reads KVSSTQKNTSSSSSTSNQN. Residues 403–447 enclose the LysM domain; sequence NTYIVQAGDSLSIIAENHGYSVEEIQQVNPGVDFSVIHPGQEINL. The span at 449-466 shows a compositional bias: polar residues; the sequence is EPTTSANSTTEQSDGANQ.

The protein belongs to the ABC transporter superfamily. Teichoic acids exporter (TC 3.A.1.104.1) family. As to quaternary structure, the complex is composed of two ATP-binding proteins (TagH) and two transmembrane proteins (TagG).

The protein localises to the cell membrane. The enzyme catalyses ATP + H2O + teichoic acidSide 1 = ADP + phosphate + teichoic acidSide 2.. Its function is as follows. Part of the ABC transporter complex TagGH involved in teichoic acids export. Responsible for energy coupling to the transport system. The protein is Teichoic acids export ATP-binding protein TagH of Lactococcus lactis subsp. lactis (strain IL1403) (Streptococcus lactis).